The chain runs to 130 residues: Small ribosomal subunit protein uS8 (130 aa).

The protein belongs to the universal ribosomal protein uS8 family. Part of the 30S ribosomal subunit. Contacts proteins S5 and S12.

Its function is as follows. One of the primary rRNA binding proteins, it binds directly to 16S rRNA central domain where it helps coordinate assembly of the platform of the 30S subunit. The polypeptide is Small ribosomal subunit protein uS8 (Acidiphilium cryptum (strain JF-5)).